A 404-amino-acid chain; its full sequence is Cysteine desulfurase IscS (404 aa).

Pyridoxal 5'-phosphate is bound by residues 75–76 (AT), N155, Q183, and 203–205 (SGH). K206 is modified (N6-(pyridoxal phosphate)lysine). T243 is a binding site for pyridoxal 5'-phosphate. C328 acts as the Cysteine persulfide intermediate in catalysis. C328 is a binding site for [2Fe-2S] cluster.

This sequence belongs to the class-V pyridoxal-phosphate-dependent aminotransferase family. NifS/IscS subfamily. In terms of assembly, homodimer. Forms a heterotetramer with IscU, interacts with other sulfur acceptors. Pyridoxal 5'-phosphate is required as a cofactor.

It localises to the cytoplasm. It carries out the reaction (sulfur carrier)-H + L-cysteine = (sulfur carrier)-SH + L-alanine. The protein operates within cofactor biosynthesis; iron-sulfur cluster biosynthesis. Functionally, master enzyme that delivers sulfur to a number of partners involved in Fe-S cluster assembly, tRNA modification or cofactor biosynthesis. Catalyzes the removal of elemental sulfur atoms from cysteine to produce alanine. Functions as a sulfur delivery protein for Fe-S cluster synthesis onto IscU, an Fe-S scaffold assembly protein, as well as other S acceptor proteins. This is Cysteine desulfurase IscS from Shewanella baltica (strain OS185).